Reading from the N-terminus, the 208-residue chain is Kininogen-1b (208 aa).

Residues 1 to 23 (MRLWFCLSFFIVLCLEHFPETLA) form the signal peptide. A compositionally biased stretch (basic and acidic residues) spans 27 to 44 (NVPESEEKTEQYLRDLPK). A disordered region spans residues 27-208 (NVPESEEKTE…RGKFHSQSHV (182 aa)).

This sequence belongs to the bradykinin-related peptide family. Expressed by the skin glands.

The protein resides in the secreted. Functionally, in vitro, produces constriction of guinea pig ileum smooth muscle. May target bradykinin receptors (BDKRB). The sequence is that of Kininogen-1b from Bombina maxima (Giant fire-bellied toad).